The following is a 544-amino-acid chain: Chaperonin GroEL (544 aa).

ATP-binding positions include 29 to 32, 86 to 90, glycine 413, 476 to 478, and aspartate 492; these read TLGP, DGTTT, and NAL.

Belongs to the chaperonin (HSP60) family. Forms a cylinder of 14 subunits composed of two heptameric rings stacked back-to-back. Interacts with the co-chaperonin GroES.

Its subcellular location is the cytoplasm. It carries out the reaction ATP + H2O + a folded polypeptide = ADP + phosphate + an unfolded polypeptide.. Functionally, together with its co-chaperonin GroES, plays an essential role in assisting protein folding. The GroEL-GroES system forms a nano-cage that allows encapsulation of the non-native substrate proteins and provides a physical environment optimized to promote and accelerate protein folding. This chain is Chaperonin GroEL, found in Desulfitobacterium hafniense (strain Y51).